Here is a 293-residue protein sequence, read N- to C-terminus: Oxidoreductase clz16 (293 aa).

This sequence belongs to the asaB hydroxylase/desaturase family.

It functions in the pathway secondary metabolite biosynthesis. In terms of biological role, oxidoreductase; part of the gene cluster that mediates the biosynthesis of squalestatin S1 (SQS1, also known as zaragozic acid A), a heavily oxidized fungal polyketide that offers potent cholesterol lowering activity by targeting squalene synthase (SS). SQS1 is composed of a 2,8-dioxobicyclic[3.2.1]octane-3,4,5-tricarboxyclic acid core that is connected to two lipophilic polyketide arms. These initial steps feature the priming of an unusual benzoic acid starter unit onto the highly reducing polyketide synthase clz14, followed by oxaloacetate extension and product release to generate a tricarboxylic acid containing product. The phenylalanine ammonia lyase (PAL) clz10 and the acyl-CoA ligase clz12 are involved in transforming phenylalanine into benzoyl-CoA. The citrate synthase-like protein clz17 is involved in connecting the C-alpha-carbons of the hexaketide chain and oxaloacetate to afford the tricarboxylic acid unit. The potential hydrolytic enzymes, clz11 and clz13, are in close proximity to pks2 and may participate in product release. On the other side, the tetraketide arm is synthesized by a the squalestatin tetraketide synthase clz2 and enzymatically esterified to the core in the last biosynthetic step, by the acetyltransferase clz6. The biosynthesis of the tetraketide must involve 3 rounds of chain extension. After the first and second rounds methyl-transfer occurs, and in all rounds of extension the ketoreductase and dehydratase are active. The enoyl reductase and C-MeT of clz2 are not active in the final round of extension. The acetyltransferase clz6 appears to have a broad substrate selectivity for its acyl CoA substrate, allowing the in vitro synthesis of novel squalestatins. The biosynthesis of SQS1 requires several oxidative steps likely performed by oxidoreductases clz3, clz15 and clz16. Finally, in support of the identification of the cluster as being responsible for SQS1 production, the cluster contains a gene encoding a putative squalene synthase (SS) clz20, suggesting a likely mechanism for self-resistance. The sequence is that of Oxidoreductase clz16 from Cochliobolus lunatus (Filamentous fungus).